Consider the following 558-residue polypeptide: Dihydroxy-acid dehydratase (558 aa).

Asp78 lines the Mg(2+) pocket. Position 119 (Cys119) interacts with [2Fe-2S] cluster. Mg(2+)-binding residues include Asp120 and Lys121. Lys121 is modified (N6-carboxylysine). [2Fe-2S] cluster is bound at residue Cys192. Glu446 provides a ligand contact to Mg(2+). Catalysis depends on Ser472, which acts as the Proton acceptor.

It belongs to the IlvD/Edd family. In terms of assembly, homodimer. [2Fe-2S] cluster is required as a cofactor. Mg(2+) serves as cofactor.

The enzyme catalyses (2R)-2,3-dihydroxy-3-methylbutanoate = 3-methyl-2-oxobutanoate + H2O. It catalyses the reaction (2R,3R)-2,3-dihydroxy-3-methylpentanoate = (S)-3-methyl-2-oxopentanoate + H2O. The protein operates within amino-acid biosynthesis; L-isoleucine biosynthesis; L-isoleucine from 2-oxobutanoate: step 3/4. It functions in the pathway amino-acid biosynthesis; L-valine biosynthesis; L-valine from pyruvate: step 3/4. Functions in the biosynthesis of branched-chain amino acids. Catalyzes the dehydration of (2R,3R)-2,3-dihydroxy-3-methylpentanoate (2,3-dihydroxy-3-methylvalerate) into 2-oxo-3-methylpentanoate (2-oxo-3-methylvalerate) and of (2R)-2,3-dihydroxy-3-methylbutanoate (2,3-dihydroxyisovalerate) into 2-oxo-3-methylbutanoate (2-oxoisovalerate), the penultimate precursor to L-isoleucine and L-valine, respectively. In Campylobacter lari (strain RM2100 / D67 / ATCC BAA-1060), this protein is Dihydroxy-acid dehydratase.